The primary structure comprises 1164 residues: Phospholipid-transporting ATPase IA (1164 aa).

At 1–75 the chain is on the cytoplasmic side; the sequence is MPTMRRTVSE…PRFLYSQFRR (75 aa). Phosphoserine is present on Ser-25. Residue Thr-28 is modified to Phosphothreonine. Ser-29 carries the phosphoserine modification. A helical transmembrane segment spans residues 76-96; the sequence is AANSFFLFIALLQQIPDVSPT. Over 97 to 100 the chain is Exoplasmic loop; it reads GRYT. A helical membrane pass occupies residues 101-121; that stretch reads TLVPLLFILAVAAIKEIIEDI. Residues 122–297 lie on the Cytoplasmic side of the membrane; that stretch reads KRHKADNAVN…SNVERITNVQ (176 aa). The helical transmembrane segment at 298 to 318 threads the bilayer; the sequence is ILILFCILIAMSLVCSVGSAI. Topologically, residues 319-339 are exoplasmic loop; sequence WNRRHSGKDWYLHLHYGGASN. A helical membrane pass occupies residues 340–360; the sequence is FGLNFLTFIILFNNLIPISLL. The Cytoplasmic portion of the chain corresponds to 361–866; the sequence is VTLEVVKFTQ…KCILYCFYKN (506 aa). Asp-409 serves as the catalytic 4-aspartylphosphate intermediate. Residues Asp-409, Lys-410, and Thr-411 each contribute to the ATP site. Mg(2+) is bound at residue Asp-409. Thr-411 is a binding site for Mg(2+). The residue at position 443 (Ser-443) is a Phosphoserine. ATP-binding positions include Glu-508, Phe-549, Lys-572, Arg-605, Thr-685, Gly-686, Asp-687, 741 to 748, Arg-775, and Lys-781; that span reads ALIIDGKT. Mg(2+) is bound at residue Asp-801. ATP is bound by residues Asn-804 and Asp-805. Residue Asp-805 coordinates Mg(2+). The helical transmembrane segment at 867-887 threads the bilayer; the sequence is IVLYIIEIWFAFVNGFSGQIL. At 888-890 the chain is on the exoplasmic loop side; it reads FER. A helical membrane pass occupies residues 891–911; that stretch reads WCIGLYNVMFTAMPPLTLGIF. Over 912–939 the chain is Cytoplasmic; that stretch reads ERSCRKENMLKYPELYKTSQNALDFNTK. The chain crosses the membrane as a helical span at residues 940 to 960; that stretch reads VFWVHCLNGLFHSVILFWFPL. At 961–977 the chain is on the exoplasmic loop side; that stretch reads KALQYGTVFGNGKTSDY. Residues 978 to 998 traverse the membrane as a helical segment; sequence LLLGNFVYTFVVITVCLKAGL. Over 999–1008 the chain is Cytoplasmic; the sequence is ETSYWTWFSH. The helical transmembrane segment at 1009–1029 threads the bilayer; sequence IAIWGSIALWVVFFGIYSSLW. The Exoplasmic loop portion of the chain corresponds to 1030-1044; sequence PAVPMAPDMSGEAAM. Residues 1045 to 1065 form a helical membrane-spanning segment; it reads LFSSGVFWVGLLSIPVASLLL. Residues 1066 to 1164 are Cytoplasmic-facing; that stretch reads DVLYKVIKRT…DTTKQRPDEW (99 aa). Residue 1095 to 1102 participates in ATP binding; that stretch reads GAVVLGKS. Ser-1126 is modified (phosphoserine).

It belongs to the cation transport ATPase (P-type) (TC 3.A.3) family. Type IV subfamily. Component of a P4-ATPase flippase complex which consists of a catalytic alpha subunit and an accessory beta subunit. Interacts with TMEM30A to form a flippase complex; this complex forms an intermediate phosphoenzyme. Interacts with TMEM30B; this interaction is reported conflictingly. Mg(2+) is required as a cofactor. In terms of processing, cleaved by calpain in a caspase- and calcium influx-dependent manner only during platelet apoptosis and may lead to inactivation. In terms of tissue distribution, found in most tissues except liver and testis. Most abundant in brain and lung. Also detected in fetal tissues. Isoform 1 is expressed in brain. Isoform 2 and isoform 3 are expressed in reticulocytes. Expressed in mouse hippocampus in both dentate gyrus (DG) and the CA3 regions. Expressed in both neuronal as well as non-neuronal cells within the DG. Highly expressed in platelets.

The protein localises to the cytoplasmic vesicle. The protein resides in the secretory vesicle. It is found in the chromaffin granule membrane. Its subcellular location is the cytoplasmic granule. It localises to the cell membrane. The protein localises to the endoplasmic reticulum. The protein resides in the golgi apparatus. It is found in the endomembrane system. It carries out the reaction ATP + H2O + phospholipidSide 1 = ADP + phosphate + phospholipidSide 2.. It catalyses the reaction a 1,2-diacyl-sn-glycero-3-phospho-L-serine(out) + ATP + H2O = a 1,2-diacyl-sn-glycero-3-phospho-L-serine(in) + ADP + phosphate + H(+). ATPase activity is stimulated by phosphatidylserine (PS) and minimally by phosphatidylethanolamine (PE). ATPase activity is inhibited by the vanadate and by the presence of calcium. Its function is as follows. Catalytic component of a P4-ATPase flippase complex which catalyzes the hydrolysis of ATP coupled to the transport of aminophospholipids from the outer to the inner leaflet of various membranes and ensures the maintenance of asymmetric distribution of phospholipids. Phospholipid translocation also seems to be implicated in vesicle formation and in uptake of lipid signaling molecules. In vitro, its ATPase activity is selectively and stereospecifically stimulated by phosphatidylserine (PS). The flippase complex ATP8A1:TMEM30A seems to play a role in regulation of cell migration probably involving flippase-mediated translocation of phosphatidylethanolamine (PE) at the cell membrane. Acts as aminophospholipid translocase at the cell membrane in neuronal cells; the activity is associated with hippocampus-dependent learning. May play a role in brain connectivity. This chain is Phospholipid-transporting ATPase IA, found in Mus musculus (Mouse).